The following is a 528-amino-acid chain: Beta-hexosaminidase subunit alpha (528 aa).

The N-terminal stretch at 1–22 is a signal peptide; it reads MAGCRLWVSLLLAAALACLATA. A propeptide spanning residues 23 to 88 is cleaved from the precursor; that stretch reads LWPWPQYIQT…PRPSFSNKQQ (66 aa). Residues cysteine 58 and cysteine 104 are joined by a disulfide bond. Residues asparagine 115, asparagine 157, and asparagine 295 are each glycosylated (N-linked (GlcNAc...) asparagine). A disulfide bridge connects residues cysteine 277 and cysteine 328. The Proton donor role is filled by glutamate 323. The critical for hydrolysis GM2 gangliosides stretch occupies residues 422 to 423; it reads NR. Asparagine 487 is a glycosylation site (N-linked (GlcNAc...) asparagine). An intrachain disulfide couples cysteine 504 to cysteine 521.

This sequence belongs to the glycosyl hydrolase 20 family. There are 3 beta-hexosaminidase isozymes: isozyme A (hexosaminidase A) is a heterodimer composed of one subunit alpha and one subunit beta (chain A and B); isozyme B (hexosaminidase B) is a homodimer of two beta subunits (two chains A and B); isozyme S (hexosaminidase S) is a homodimer of two alpha subunits. The composition of the dimer (isozyme A versus isozyme S) has a significant effect on the substrate specificity of the alpha subunit active site. As to expression, ubiquitous. Most abundant in testis, adrenal, epididymis and heart. Low levels seen in the liver.

The protein localises to the lysosome. The catalysed reaction is Hydrolysis of terminal non-reducing N-acetyl-D-hexosamine residues in N-acetyl-beta-D-hexosaminides.. It carries out the reaction N-acetyl-beta-D-galactosaminyl-(1-&gt;4)-beta-D-3-sulfogalactosyl-(1-&gt;4)-beta-D-glucosyl-(1&lt;-&gt;1')-ceramide + H2O = a beta-D-3-sulfogalactosyl-(1-&gt;4)-beta-D-glucosyl-(1&lt;-&gt;1')-ceramide + N-acetyl-beta-D-galactosamine. It catalyses the reaction a ganglioside GM2 (d18:1(4E)) + H2O = a ganglioside GM3 (d18:1(4E)) + N-acetyl-beta-D-galactosamine. The enzyme catalyses a ganglioside GM2 + H2O = a ganglioside GM3 + N-acetyl-beta-D-galactosamine. The catalysed reaction is beta-D-GalNAc-(1-&gt;4)-alpha-L-IdoA-(1-&gt;3)-beta-D-GalNAc-4-sulfate-(1-&gt;4)-alpha-L-IdoA-(1-&gt;3)-D-GalNAc-4-sulfate + H2O = alpha-L-IdoA-(1-&gt;3)-beta-D-GalNAc-4-sulfate-(1-&gt;4)-alpha-L-IdoA-(1-&gt;3)-D-GalNAc-4-sulfate + N-acetyl-D-galactosamine. It carries out the reaction N-acetyl-beta-D-6-sulfogalactosaminyl-(1-&gt;4)-alpha-L-iduronyl-(1-&gt;3)-N-acetyl-D-6-sulfogalactosamine + H2O = alpha-L-iduronyl-(1-&gt;3)-N-acetyl-D-6-sulfogalactosamine + N-acetyl-D-6-sulfogalactosamine. Its activity is regulated as follows. Addition of GM2A stimulates the hydrolysis of sulfated glycosphingolipid SM2 and the ganglioside GM2. Its function is as follows. Hydrolyzes the non-reducing end N-acetyl-D-hexosamine and/or sulfated N-acetyl-D-hexosamine of glycoconjugates, such as the oligosaccharide moieties from proteins and neutral glycolipids, or from certain mucopolysaccharides. The isozyme S is as active as the isozyme A on the anionic bis-sulfated glycans, the chondroitin-6-sulfate trisaccharide (C6S-3), and the dermatan sulfate pentasaccharide, and the sulfated glycosphingolipid SM2. The isozyme B does not hydrolyze each of these substrates, however hydrolyzes efficiently neutral oligosaccharide. Only the isozyme A is responsible for the degradation of GM2 gangliosides in the presence of GM2A. This is Beta-hexosaminidase subunit alpha from Mus musculus (Mouse).